A 133-amino-acid chain; its full sequence is Small ribosomal subunit protein uS8 (133 aa).

This sequence belongs to the universal ribosomal protein uS8 family. Part of the 30S ribosomal subunit.

Functionally, one of the primary rRNA binding proteins, it binds directly to 16S rRNA central domain where it helps coordinate assembly of the platform of the 30S subunit. The polypeptide is Small ribosomal subunit protein uS8 (Sulfolobus acidocaldarius (strain ATCC 33909 / DSM 639 / JCM 8929 / NBRC 15157 / NCIMB 11770)).